The chain runs to 420 residues: Serine hydroxymethyltransferase (420 aa).

(6S)-5,6,7,8-tetrahydrofolate-binding positions include Leu121 and 125 to 127; that span reads GHL. Lys230 bears the N6-(pyridoxal phosphate)lysine mark. Residues Glu246 and 354–356 each bind (6S)-5,6,7,8-tetrahydrofolate; that span reads SPF.

Belongs to the SHMT family. Homodimer. Pyridoxal 5'-phosphate serves as cofactor.

It is found in the cytoplasm. The catalysed reaction is (6R)-5,10-methylene-5,6,7,8-tetrahydrofolate + glycine + H2O = (6S)-5,6,7,8-tetrahydrofolate + L-serine. The protein operates within one-carbon metabolism; tetrahydrofolate interconversion. Its pathway is amino-acid biosynthesis; glycine biosynthesis; glycine from L-serine: step 1/1. Catalyzes the reversible interconversion of serine and glycine with tetrahydrofolate (THF) serving as the one-carbon carrier. This reaction serves as the major source of one-carbon groups required for the biosynthesis of purines, thymidylate, methionine, and other important biomolecules. Also exhibits THF-independent aldolase activity toward beta-hydroxyamino acids, producing glycine and aldehydes, via a retro-aldol mechanism. The sequence is that of Serine hydroxymethyltransferase from Rickettsia massiliae (strain Mtu5).